Here is a 286-residue protein sequence, read N- to C-terminus: Pantothenate synthetase (286 aa).

30–37 (MGNLHAGH) is an ATP binding site. His37 functions as the Proton donor in the catalytic mechanism. Gln61 contributes to the (R)-pantoate binding site. Gln61 provides a ligand contact to beta-alanine. 149–152 (GEKD) serves as a coordination point for ATP. A (R)-pantoate-binding site is contributed by Gln155. ATP-binding positions include Val178 and 186 to 189 (MSSR).

This sequence belongs to the pantothenate synthetase family. Homodimer.

Its subcellular location is the cytoplasm. The enzyme catalyses (R)-pantoate + beta-alanine + ATP = (R)-pantothenate + AMP + diphosphate + H(+). The protein operates within cofactor biosynthesis; (R)-pantothenate biosynthesis; (R)-pantothenate from (R)-pantoate and beta-alanine: step 1/1. Functionally, catalyzes the condensation of pantoate with beta-alanine in an ATP-dependent reaction via a pantoyl-adenylate intermediate. The sequence is that of Pantothenate synthetase from Methylococcus capsulatus (strain ATCC 33009 / NCIMB 11132 / Bath).